The following is a 205-amino-acid chain: Lymphotoxin-alpha (205 aa).

Residues 1-34 (MTPPERLFLPRVCGTTLHLLLLGLLLVLLPGAQG) form the signal peptide. T41 carries an O-linked (GalNAc...) threonine; partial glycan. The region spanning 63–205 (PAAHLIGDPS…STVFFGAFAL (143 aa)) is the THD domain. Residue N96 is glycosylated (N-linked (GlcNAc...) asparagine).

This sequence belongs to the tumor necrosis factor family. Homotrimer, and heterotrimer of either two LTB and one LTA subunits or (less prevalent) two LTA and one LTB subunits. Interacts with TNFRSF14.

The protein localises to the secreted. The protein resides in the membrane. Its function is as follows. Cytokine that in its homotrimeric form binds to TNFRSF1A/TNFR1, TNFRSF1B/TNFBR and TNFRSF14/HVEM. In its heterotrimeric form with LTB binds to TNFRSF3/LTBR. Lymphotoxin is produced by lymphocytes and is cytotoxic for a wide range of tumor cells in vitro and in vivo. This Homo sapiens (Human) protein is Lymphotoxin-alpha (LTA).